We begin with the raw amino-acid sequence, 40 residues long: Photosystem II reaction center protein J (40 aa).

The chain crosses the membrane as a helical span at residues 8–28 (IPLWLIGTVTGIPVIGLVGVF).

It belongs to the PsbJ family. As to quaternary structure, PSII is composed of 1 copy each of membrane proteins PsbA, PsbB, PsbC, PsbD, PsbE, PsbF, PsbH, PsbI, PsbJ, PsbK, PsbL, PsbM, PsbT, PsbX, PsbY, PsbZ, Psb30/Ycf12, at least 3 peripheral proteins of the oxygen-evolving complex and a large number of cofactors. It forms dimeric complexes.

The protein resides in the plastid. It localises to the chloroplast thylakoid membrane. In terms of biological role, one of the components of the core complex of photosystem II (PSII). PSII is a light-driven water:plastoquinone oxidoreductase that uses light energy to abstract electrons from H(2)O, generating O(2) and a proton gradient subsequently used for ATP formation. It consists of a core antenna complex that captures photons, and an electron transfer chain that converts photonic excitation into a charge separation. This chain is Photosystem II reaction center protein J, found in Lolium perenne (Perennial ryegrass).